A 349-amino-acid polypeptide reads, in one-letter code: 5-deoxyribose 1-phosphate isomerase (349 aa).

Substrate contacts are provided by residues 49–51 (RGA), arginine 92, and glutamine 199. Aspartate 240 acts as the Proton donor in catalysis. A substrate-binding site is contributed by 250-251 (NK).

It belongs to the EIF-2B alpha/beta/delta subunits family. DrdI subfamily.

The enzyme catalyses 5-deoxy-alpha-D-ribose 1-phosphate = 5-deoxy-D-ribulose 1-phosphate. The protein operates within carbohydrate degradation. Functionally, catalyzes the isomerization of 5-deoxy-alpha-D-ribose 1-phosphate to 5-deoxy-D-ribulose 1-phosphate, as part of a 5-deoxyribose salvage pathway that recycles this toxic radical SAM enzyme by-product to mainstream metabolites. This is 5-deoxyribose 1-phosphate isomerase from Clostridium botulinum (strain Loch Maree / Type A3).